We begin with the raw amino-acid sequence, 943 residues long: Isoleucine--tRNA ligase (943 aa).

A 'HIGH' region motif is present at residues 58 to 68 (PYANGSIHIGH). Residue glutamate 567 coordinates L-isoleucyl-5'-AMP. The short motif at 608-612 (KMSKS) is the 'KMSKS' region element. Lysine 611 contributes to the ATP binding site. Positions 906, 909, 926, and 929 each coordinate Zn(2+).

It belongs to the class-I aminoacyl-tRNA synthetase family. IleS type 1 subfamily. In terms of assembly, monomer. Zn(2+) serves as cofactor.

It is found in the cytoplasm. The enzyme catalyses tRNA(Ile) + L-isoleucine + ATP = L-isoleucyl-tRNA(Ile) + AMP + diphosphate. In terms of biological role, catalyzes the attachment of isoleucine to tRNA(Ile). As IleRS can inadvertently accommodate and process structurally similar amino acids such as valine, to avoid such errors it has two additional distinct tRNA(Ile)-dependent editing activities. One activity is designated as 'pretransfer' editing and involves the hydrolysis of activated Val-AMP. The other activity is designated 'posttransfer' editing and involves deacylation of mischarged Val-tRNA(Ile). The sequence is that of Isoleucine--tRNA ligase from Ectopseudomonas mendocina (strain ymp) (Pseudomonas mendocina).